The primary structure comprises 1337 residues: ABC transporter D family member 1 (1337 aa).

4 helical membrane passes run 24-44 (ILLA…KSRV), 142-162 (APLF…LSTL), 247-267 (YASP…GTAI), and 342-362 (FLLK…PFFS). Residues 117 to 395 (VFRTALSNRL…SVIISLFQAL (279 aa)) enclose the ABC transmembrane type-1 1 domain. In terms of domain architecture, ABC transporter 1 spans 448–695 (VEFSDVKVVT…DAMVVQRAFA (248 aa)). Residue 481-488 (GPNGSGKS) coordinates ATP. Positions 751 to 1049 (LIPTIFDKQG…VVSQSFMAFG (299 aa)) constitute an ABC transmembrane type-1 2 domain. Residues 900–920 (LLTGQRGVAILYTYMLLGLGF) traverse the membrane as a helical segment. Residues 1091–1337 (LDSQDLLSFS…ELRSIEQTTE (247 aa)) enclose the ABC transporter 2 domain. ATP is bound at residue 1130 to 1137 (GPNGSGKT).

This sequence belongs to the ABC transporter superfamily. ABCD family. Peroxisomal fatty acyl CoA transporter (TC 3.A.1.203) subfamily.

The protein resides in the peroxisome membrane. The protein localises to the glyoxysome membrane. It carries out the reaction an acyl-CoA(out) + ATP + H2O = an acyl-CoA(in) + ADP + phosphate + H(+). Contributes to the transport of fatty acids and their derivatives (acyl CoAs) across the peroxisomal membrane. Provides acetate to the glyoxylate cycle in developing seedlings. Involved in pollen tube elongation, ovule fertilization, and seeds germination after imbibition (controls the switch between the opposing developmental programs of dormancy and germination), probably by promoting beta-oxidation of storage lipids during gluconeogenesis. Required for biosynthesis of jasmonic acid and conversion of indole butyric acid to indole acetic acid. Confers sensitivity to monofluoroacetic acid (FAc), a toxic acetate analog, and to 2,4-dichlorophenoxybutyric acid (2,4-DB) and indole-3-butyric acid (IBA), two precursors of auxin after beta-oxidation. This chain is ABC transporter D family member 1, found in Arabidopsis thaliana (Mouse-ear cress).